A 630-amino-acid polypeptide reads, in one-letter code: A-type voltage-gated potassium channel KCND2 (630 aa).

Residues 1-184 (MAAGVAAWLP…FENPHTSTMA (184 aa)) lie on the Cytoplasmic side of the membrane. Residues 2–20 (AAGVAAWLPFARAAAIGWM) form an interaction with KCNIP1, KCNIP2, and other family members region. Thr38 is modified (phosphothreonine). Positions 71–90 (ERDFFYHPETQQYFFDRDPD) are interaction with KCNIP1. Positions 105, 111, 132, and 133 each coordinate Zn(2+). Residues 185–206 (LVFYYVTGFFIAVSVIANVVET) form a helical membrane-spanning segment. The Extracellular segment spans residues 207–226 (VPCGSSPGHIKELPCGERYA). The helical transmembrane segment at 227-249 (VAFFCLDTACVMIFTVEYLLRLA) threads the bilayer. Residues 250-256 (AAPSRYR) lie on the Cytoplasmic side of the membrane. A helical membrane pass occupies residues 257-281 (FVRSVMSIIDVVAILPYYIGLVMTD). Over 282–287 (NEDVSG) the chain is Extracellular. A helical; Voltage-sensor transmembrane segment spans residues 288-307 (AFVTLRVFRVFRIFKFSRHS). Residues 308-321 (QGLRILGYTLKSCA) are Cytoplasmic-facing. The tract at residues 308–321 (QGLRILGYTLKSCA) is S4-S5 linker. The helical transmembrane segment at 322–345 (SELGFLLFSLTMAIIIFATVMFYA) threads the bilayer. The Extracellular segment spans residues 346-357 (EKGSSASKFTSI). The segment at residues 358–369 (PAAFWYTIVTMT) is an intramembrane region (helical). Residues Thr370, Leu371, Gly372, and Tyr373 each contribute to the K(+) site. The Selectivity filter motif lies at 370 to 375 (TLGYGD). The stretch at 370-377 (TLGYGDMV) is an intramembrane region. Over 378 to 380 (PKT) the chain is Extracellular. The chain crosses the membrane as a helical span at residues 381–403 (IAGKIFGSICSLSGVLVIALPVP). The Cytoplasmic portion of the chain corresponds to 404–630 (VIVSNFSRIY…GGNIVRVSAL (227 aa)). Positions 474 to 489 (FETQHHHLLHCLEKTT) are required for dendritic targeting. Positions 474 to 630 (FETQHHHLLH…GGNIVRVSAL (157 aa)) are important for normal channel activation and inactivation, for interaction with KCNIP2, and probably other family members as well. A phosphoserine mark is found at Ser548, Ser552, Ser572, and Ser575. Residues 600–622 (IPTPPVTTPEGDDRPESPEYSGG) form a disordered region. 2 positions are modified to phosphothreonine: Thr602 and Thr607. Ser616 carries the post-translational modification Phosphoserine. The short motif at 627-630 (VSAL) is the PDZ-binding element.

Belongs to the potassium channel family. D (Shal) (TC 1.A.1.2) subfamily. Kv4.2/KCND2 sub-subfamily. Homotetramer or heterotetramer with KCND1 or KCND3. Associates with the regulatory subunits KCNIP2, KCNIP3 and KCNIP4. Interacts with the regulatory subunit KCNIP1; this interaction mediates the capture of both the N- and C-terminus of KCND2, preventing N-type inactivation and stabilizing the S6 conformation, thereby accelerating closed state inactivation and recovery. In vivo, probably exists as heteromeric complex containing variable proportions of KCND1, KCND2, KCND3, KCNIP1, KCNIP2, KCNIP3, KCNIP4, DPP6 and DPP10. The tetrameric channel can associate with up to four regulatory subunits, such as KCNIP2 or KCNIP4. Interaction with four KCNIP4 chains does not reduce interaction with DPP10. Interacts with DLG4 and NCS1/FREQ. Interacts with DLG1. Probably part of a complex consisting of KCNIP1, KCNIP2 isoform 3 and KCND2. Interacts with FLNA, FLNC and DPP10. Identified in a complex with cAMP-dependent protein kinase (PKA), CAV3, AKAP6 and KCND3 in cardiac myocytes. Interacts (via S1 and S2 helices) with DPP6; this interaction stabilizes the conformation of the S1-S2 helices and facilitates S4 conformational change, including S4 sliding up and down, thereby accelerating activation, inactivation, and recovery. Phosphorylation in response to MAPK activation is increased in stimulated dendrites. Interaction with KCNIP2 and DPP6 propomtes phosphorylation by PKA at Ser-552. Phosphorylation at Ser-552 has no effect on interaction with KCNIP3, but is required for the regulation of channel activity by KCNIP3. Phosphorylation at Ser-552 leads to KCND2 internalization. Phosphorylated by MAPK in response to signaling via the metabotropic glutamate receptor GRM5. Phosphorylation at Ser-616 is required for the down-regulation of neuronal A-type currents in response to signaling via GRM5.

The protein localises to the cell membrane. It localises to the cell projection. Its subcellular location is the dendrite. It is found in the synapse. The protein resides in the perikaryon. The protein localises to the postsynaptic cell membrane. It localises to the dendritic spine. Its subcellular location is the sarcolemma. It is found in the cell junction. The protein resides in the membrane. The protein localises to the caveola. The enzyme catalyses K(+)(in) = K(+)(out). Voltage-gated potassium channel that mediates transmembrane potassium transport in excitable membranes, primarily in the brain, but also in rodent heart. Mediates the major part of the dendritic A-type current I(SA) in brain neurons. This current is activated at membrane potentials that are below the threshold for action potentials. It regulates neuronal excitability, prolongs the latency before the first spike in a series of action potentials, regulates the frequency of repetitive action potential firing, shortens the duration of action potentials and regulates the back-propagation of action potentials from the neuronal cell body to the dendrites. Contributes to the regulation of the circadian rhythm of action potential firing in suprachiasmatic nucleus neurons, which regulates the circadian rhythm of locomotor activity. Functions downstream of the metabotropic glutamate receptor GRM5 and plays a role in neuronal excitability and in nociception mediated by activation of GRM5. Mediates the transient outward current I(to) in rodent heart left ventricle apex cells, but not in human heart, where this current is mediated by another family member. Forms tetrameric potassium-selective channels through which potassium ions pass in accordance with their electrochemical gradient. The channel alternates between opened and closed conformations in response to the voltage difference across the membrane. Can form functional homotetrameric channels and heterotetrameric channels that contain variable proportions of KCND2 and KCND3; channel properties depend on the type of pore-forming alpha subunits that are part of the channel. In vivo, membranes probably contain a mixture of heteromeric potassium channel complexes. Interaction with specific isoforms of the regulatory subunits KCNIP1, KCNIP2, KCNIP3 or KCNIP4 strongly increases expression at the cell surface and thereby increases channel activity; it modulates the kinetics of channel activation and inactivation, shifts the threshold for channel activation to more negative voltage values, shifts the threshold for inactivation to less negative voltages and accelerates recovery after inactivation. Likewise, interaction with DPP6 or DPP10 promotes expression at the cell membrane and regulates both channel characteristics and activity. Upon depolarization, the channel goes from a resting closed state (C state) to an activated but non-conducting state (C* state), from there, the channel may either inactivate (I state) or open (O state). The chain is A-type voltage-gated potassium channel KCND2 from Mustela putorius furo (European domestic ferret).